Consider the following 478-residue polypeptide: Probable L-ascorbate peroxidase 8, chloroplastic (478 aa).

Over residues 1 to 13 the composition is skewed to low complexity; that stretch reads MAERIAASLLPAA. 2 disordered regions span residues 1 to 31 and 44 to 66; these read MAER…VSAA and GGLR…RSGR. The transit peptide at 1 to 76 directs the protein to the chloroplast; it reads MAERIAASLL…AGAGARAVVR (76 aa). Residues 14–26 show a composition bias toward pro residues; the sequence is SPSPAPSPPPPRP. Catalysis depends on His117, which acts as the Proton acceptor. Residues 245 to 276 are disordered; sequence AHTLGRSRPDRSGWGKPETKYTKDGPGEPGGQ. His246 provides a ligand contact to heme b. Thr247 is a binding site for K(+). The segment covering 251-270 has biased composition (basic and acidic residues); that stretch reads SRPDRSGWGKPETKYTKDGP. Residues Thr279 and Asp286 each contribute to the K(+) site. The segment at 346 to 417 is disordered; the sequence is AKFDPPEGFS…DNNGAAPQPE (72 aa). Residues 369-381 are compositionally biased toward pro residues; the sequence is PAPAPAAAPPPPP. Residues 394–406 are compositionally biased toward low complexity; the sequence is PVTVGAAVASSPA. A helical membrane pass occupies residues 458 to 478; the sequence is YFLNIMLLIGGLAFLTSLLGS.

This sequence belongs to the peroxidase family. Ascorbate peroxidase subfamily. In terms of assembly, interacts with SWEET11/OS8N3. It depends on heme b as a cofactor. In terms of tissue distribution, expressed in roots, leaves, stems and flowers. Expressed in leaves, shoots and panicles. Expressed at low levels in roots.

The protein resides in the plastid. The protein localises to the chloroplast thylakoid membrane. The enzyme catalyses L-ascorbate + H2O2 = L-dehydroascorbate + 2 H2O. In terms of biological role, involved in defense response and tolerance to the bacterial pathogen Xanthomonas oryzae pv. oryzae (Xoo). Plays an important role in hydrogen peroxide removal during infection by Xoo. Involved in response to abiotic stress. Plays a role in hydrogen peroxide removal durings salt stress. This chain is Probable L-ascorbate peroxidase 8, chloroplastic, found in Oryza sativa subsp. japonica (Rice).